Here is a 77-residue protein sequence, read N- to C-terminus: uncharacterized protein (77 aa).

2 helical membrane passes run 22 to 42 and 44 to 64; these read VFAN…LPVG and LIGL…FFLG.

It is found in the cell membrane. This is an uncharacterized protein from Methanocaldococcus jannaschii (strain ATCC 43067 / DSM 2661 / JAL-1 / JCM 10045 / NBRC 100440) (Methanococcus jannaschii).